Reading from the N-terminus, the 172-residue chain is Large ribosomal subunit protein uL10 (172 aa).

This sequence belongs to the universal ribosomal protein uL10 family. In terms of assembly, part of the ribosomal stalk of the 50S ribosomal subunit. The N-terminus interacts with L11 and the large rRNA to form the base of the stalk. The C-terminus forms an elongated spine to which L12 dimers bind in a sequential fashion forming a multimeric L10(L12)X complex.

In terms of biological role, forms part of the ribosomal stalk, playing a central role in the interaction of the ribosome with GTP-bound translation factors. The protein is Large ribosomal subunit protein uL10 of Francisella tularensis subsp. mediasiatica (strain FSC147).